Here is a 271-residue protein sequence, read N- to C-terminus: Pyrroline-5-carboxylate reductase (271 aa).

Belongs to the pyrroline-5-carboxylate reductase family.

Its subcellular location is the cytoplasm. The catalysed reaction is L-proline + NADP(+) = (S)-1-pyrroline-5-carboxylate + NADPH + 2 H(+). The enzyme catalyses L-proline + NAD(+) = (S)-1-pyrroline-5-carboxylate + NADH + 2 H(+). The protein operates within amino-acid biosynthesis; L-proline biosynthesis; L-proline from L-glutamate 5-semialdehyde: step 1/1. Its function is as follows. Catalyzes the reduction of 1-pyrroline-5-carboxylate (PCA) to L-proline. The chain is Pyrroline-5-carboxylate reductase from Staphylococcus haemolyticus (strain JCSC1435).